We begin with the raw amino-acid sequence, 415 residues long: Prostate tumor-overexpressed gene 1 protein homolog (415 aa).

A disordered region spans residues 1-54; the sequence is MVRPRRAPHRSGAGGPLGGRGRPLRPFTARAARSRSWPASPRGPQPPRIRARSA. Gly residues predominate over residues 12–21; the sequence is GAGGPLGGRG. Residues 24–40 show a composition bias toward low complexity; sequence LRPFTARAARSRSWPAS. Ser-53 carries the post-translational modification Phosphoserine. The segment at 184–415 is interaction with FLOT1; it reads NGFAGCMLFP…QEQQQRGMGG (232 aa).

The protein belongs to the Mediator complex subunit 25 family. PTOV1 subfamily. In terms of assembly, may interact with CREBBP. Interacts with FLOT1. Ubiquitinated by the CRL2(KLHDC2) complex, which recognizes the diglycine (Gly-Gly) at the C-terminus, leading to its degradation. Ubiquitinated by the CRL2(APPBP2) complex, which recognizes the Arg-Xaa-Xaa-Gly sequence at the C-terminus, leading to its degradation.

It localises to the cytoplasm. Its subcellular location is the nucleus. The protein localises to the cell membrane. The protein resides in the perinuclear region. Its function is as follows. May activate transcription. Required for nuclear translocation of FLOT1. Promotes cell proliferation. The polypeptide is Prostate tumor-overexpressed gene 1 protein homolog (PTOV1) (Bos taurus (Bovine)).